The sequence spans 55 residues: Large ribosomal subunit protein bL33 (55 aa).

It belongs to the bacterial ribosomal protein bL33 family.

This Bifidobacterium longum (strain DJO10A) protein is Large ribosomal subunit protein bL33.